The sequence spans 163 residues: Phosphopantetheine adenylyltransferase (163 aa).

T9 is a substrate binding site. ATP is bound by residues 9-10 (TF) and H17. Substrate-binding residues include K41, L73, and R87. Residues 88 to 90 (GLR), E98, and 123 to 129 (YQFISGT) each bind ATP.

It belongs to the bacterial CoaD family. As to quaternary structure, homohexamer. Requires Mg(2+) as cofactor.

The protein localises to the cytoplasm. The catalysed reaction is (R)-4'-phosphopantetheine + ATP + H(+) = 3'-dephospho-CoA + diphosphate. The protein operates within cofactor biosynthesis; coenzyme A biosynthesis; CoA from (R)-pantothenate: step 4/5. Its function is as follows. Reversibly transfers an adenylyl group from ATP to 4'-phosphopantetheine, yielding dephospho-CoA (dPCoA) and pyrophosphate. This Herminiimonas arsenicoxydans protein is Phosphopantetheine adenylyltransferase.